A 403-amino-acid polypeptide reads, in one-letter code: Basic leucine zipper 25 (403 aa).

2 disordered regions span residues Ser13 to Val128 and Val156 to Thr259. The span at Pro24–Thr33 shows a compositional bias: low complexity. Residues Leu56–Glu69 show a composition bias toward polar residues. Composition is skewed to low complexity over residues Ala115–Val128 and Ser161–Ser174. Residues Ile175–Gln195 show a composition bias toward polar residues. Residues Asp212–Asp226 show a composition bias toward acidic residues. A Phosphoserine modification is found at Ser213. In terms of domain architecture, bZIP spans Asp229 to Leu292. Positions Lys231–Lys250 are basic motif. The short motif at Ala233 to Arg240 is the Nuclear localization signal element. The interval Leu264–Leu271 is leucine-zipper. Residues Asn332–Asn345 show a composition bias toward low complexity. Disordered regions lie at residues Asn332–Leu361 and Glu380–His403. A compositionally biased stretch (polar residues) spans Ala351–Leu361.

The protein belongs to the bZIP family. In terms of assembly, homodimer. Forms a heterodimer with BZIP1, BZIP1, BZIP2, BZIP9, BZIP11, BZIP44, BZIP53 and BZIP63. Interacts with ABI3 and forms a complex made of ABI3, BZIP53 and BZIP25. Expressed in roots, shoots, stems, leaves, stipulae, siliques, seeds, pollen, and flowers.

It localises to the nucleus. Transcription factor that binds to the 5'-ACGT-3' box, especially present in G-box-like motif (5'-CCACGTGGCC-3'), ABRE elements, of seed storage protein (SSP) encoding gene promoters (e.g. At2S and CRU3) and promotes their expression in seeds when in complex with ABI3 and BZIP53. The protein is Basic leucine zipper 25 (BZIP25) of Arabidopsis thaliana (Mouse-ear cress).